The sequence spans 447 residues: GTPase Der (447 aa).

2 consecutive EngA-type G domains span residues 4–165 (QIIT…PEEE) and 180–357 (LQIV…KIWN). Residues 10–17 (GRPNVGKS), 57–61 (DTPGL), 119–122 (NKCE), 186–193 (GRPNAGKS), 233–237 (DTAGL), and 298–301 (NKWD) each bind GTP. The 86-residue stretch at 358-443 (KKITTSKLNE…PIRFIYVKTK (86 aa)) folds into the KH-like domain.

It belongs to the TRAFAC class TrmE-Era-EngA-EngB-Septin-like GTPase superfamily. EngA (Der) GTPase family. In terms of assembly, associates with the 50S ribosomal subunit.

Functionally, GTPase that plays an essential role in the late steps of ribosome biogenesis. This Rickettsia peacockii (strain Rustic) protein is GTPase Der.